The chain runs to 142 residues: Calmodulin-alpha (142 aa).

Residue Ala-2 is modified to N-acetylalanine. EF-hand domains are found at residues 8 to 43, 44 to 79, 81 to 116, and 117 to 142; these read EQIA…LGQN, PTEA…KMKD, DSEE…LGEK, and LTDE…YEEF. Positions 21, 23, 25, 27, 32, 57, 59, 61, 63, 68, 94, 96, 98, 100, and 105 each coordinate Ca(2+). The residue at position 116 (Lys-116) is an N6,N6,N6-trimethyllysine. Residues Asp-130, Asp-132, Asp-134, Gln-136, and Glu-141 each coordinate Ca(2+).

This sequence belongs to the calmodulin family.

In terms of biological role, calmodulin mediates the control of a large number of enzymes, ion channels and other proteins by Ca(2+). Among the enzymes to be stimulated by the calmodulin-Ca(2+) complex are a number of protein kinases and phosphatases. In Arbacia punctulata (Punctuate sea urchin), this protein is Calmodulin-alpha.